The primary structure comprises 290 residues: Elongation factor Ts (290 aa).

Positions 80–83 (TDFV) are involved in Mg(2+) ion dislocation from EF-Tu.

This sequence belongs to the EF-Ts family.

The protein resides in the cytoplasm. Functionally, associates with the EF-Tu.GDP complex and induces the exchange of GDP to GTP. It remains bound to the aminoacyl-tRNA.EF-Tu.GTP complex up to the GTP hydrolysis stage on the ribosome. This Neorickettsia sennetsu (strain ATCC VR-367 / Miyayama) (Ehrlichia sennetsu) protein is Elongation factor Ts.